The sequence spans 1719 residues: Sodium channel protein type 4 subunit alpha B (1719 aa).

The Cytoplasmic segment spans residues 1-126; that stretch reads MRTLLPPVGS…IVAIKILIHS (126 aa). Residues 28 to 50 form a disordered region; the sequence is QQIREEERKRTNAQVSEELPEPA. One copy of the I repeat lies at 108–431; that stretch reads LLSPFNALRI…VVAMAYAEQN (324 aa). Residues 127–145 form a helical membrane-spanning segment; that stretch reads LFSLFIMATILTNCAFMTL. Residues 146 to 152 lie on the Extracellular side of the membrane; that stretch reads SDPPAWS. The helical transmembrane segment at 153–173 threads the bilayer; the sequence is KTMEYVFTFIYTFEATIKILS. Residues 174–187 lie on the Cytoplasmic side of the membrane; it reads RGFCVGKFTFLKDP. The chain crosses the membrane as a helical span at residues 188 to 205; sequence WNWLDFMVISMAYLTELV. Residues 206 to 211 lie on the Extracellular side of the membrane; sequence DLGNVS. The N-linked (GlcNAc...) asparagine glycan is linked to N209. The helical transmembrane segment at 212 to 228 threads the bilayer; it reads VLRTFRVLRALKTITVI. Residues 229–247 lie on the Cytoplasmic side of the membrane; the sequence is PGLKTIVGALIQSVRKLAD. Residues 248–267 traverse the membrane as a helical segment; that stretch reads AMVLTVFCLSVFALIGLQLF. The Extracellular segment spans residues 268 to 368; it reads MGNLRQKCVL…PNYGYTSYDS (101 aa). A disulfide bridge links C275 with C337. N-linked (GlcNAc...) asparagine glycans are attached at residues N285 and N339. The cysteines at positions 346 and 352 are disulfide-linked. Positions 369–393 form an intramembrane region, pore-forming; the sequence is FGWAFLALFRLMTQDFWENLFQLTL. The Extracellular segment spans residues 394–400; sequence RTAGKTY. The helical transmembrane segment at 401–421 threads the bilayer; it reads MIFFVVVIFLGSFYLINLILA. The Cytoplasmic portion of the chain corresponds to 422–513; sequence VVAMAYAEQN…ECLYAIVMDP (92 aa). An II repeat occupies 495-766; the sequence is CCGCWRHLKE…QIAINRINRA (272 aa). The helical transmembrane segment at 514 to 532 threads the bilayer; sequence FVDLGITICIILNTVFMAM. Residues 533-543 are Extracellular-facing; it reads EHYPMSADFEE. Residues 544–563 form a helical membrane-spanning segment; the sequence is LLSVGNLVFTGIFTGEMVFK. Residues 564–577 lie on the Cytoplasmic side of the membrane; the sequence is ILAMDPYFYFQVGW. Residues 578 to 597 form a helical membrane-spanning segment; it reads NIFDSIIVTISLVELGLANV. Residues 598–599 lie on the Extracellular side of the membrane; sequence QG. A helical transmembrane segment spans residues 600-617; the sequence is LSVLRSFRLMRVFKLAKS. At 618-633 the chain is on the cytoplasmic side; it reads WPTLNMLIKIIGNSVG. Residues 634–652 traverse the membrane as a helical segment; it reads ALGNLTLVLAIIVFIFAVV. The Extracellular portion of the chain corresponds to 653–681; it reads GMQLFGKNYKDCVCRISEDCVLPRWHMND. The cysteines at positions 666 and 672 are disulfide-linked. Residues 682–702 constitute an intramembrane region (pore-forming); sequence FFHAFLIIFRVLCGEWIESMW. The Extracellular segment spans residues 703-713; sequence DCMEVSGQTMC. C704 and C713 are oxidised to a cystine. Residues 714–732 traverse the membrane as a helical segment; sequence LIVFMMVLVIGNLVVLNLF. Residues 733-919 lie on the Cytoplasmic side of the membrane; it reads LALLLSSFSG…TCFSIVENNY (187 aa). A compositionally biased stretch (acidic residues) spans 834-845; sequence SDSDDSDYDEDK. The tract at residues 834 to 862 is disordered; it reads SDSDDSDYDEDKDSQCDESSVCSSVQKPE. The stretch at 900 to 1215 is one III repeat; sequence RGKIWCNIRR…KKYYNAMKKL (316 aa). A helical membrane pass occupies residues 920–937; sequence FESFIVFMILLSSGALAF. Topologically, residues 938 to 950 are extracellular; that stretch reads EDIYLEKHQLIKS. A helical transmembrane segment spans residues 951 to 969; sequence ILEYADKVFTYVFVMEMVL. The Cytoplasmic portion of the chain corresponds to 970–983; sequence KWFAYGFKSYFSNA. Residues 984–1002 traverse the membrane as a helical segment; that stretch reads WCWLDFLIVDVSLVSLTAN. Topologically, residues 1003–1010 are extracellular; that stretch reads ILGYSELG. A helical transmembrane segment spans residues 1011-1029; that stretch reads AIKSLRTLRALRPLRALSR. The Cytoplasmic portion of the chain corresponds to 1030-1046; the sequence is FEGMRVVVNALVGAVPS. Residues 1047–1066 form a helical membrane-spanning segment; that stretch reads IFNVLLVCLIFWLIFSIMGV. The Extracellular segment spans residues 1067–1119; the sequence is NLFAGKFSYCFNETSQEIIDTKVVDNKTECIALIKANFTEVRWKNVKVNYDNV. The cysteines at positions 1076 and 1096 are disulfide-linked. N-linked (GlcNAc...) asparagine glycosylation is found at N1078 and N1092. Positions 1120–1141 form an intramembrane region, pore-forming; it reads GIGYLSLLQVATFKGWTDIMYA. Residues 1142–1158 lie on the Extracellular side of the membrane; that stretch reads AVDSRDVESQPIYEVNL. The chain crosses the membrane as a helical span at residues 1159–1180; sequence YMYLYFVIFIIFGSFFTLNLFI. At 1181–1243 the chain is on the cytoplasmic side; it reads GVIIDNFNQQ…LVFDLVTKQI (63 aa). Residues 1199 to 1201 are important for rapid channel inactivation; sequence IFM. An IV repeat occupies 1224–1521; sequence VPRPENPFQG…WEKFDPDASQ (298 aa). A helical membrane pass occupies residues 1244-1261; that stretch reads FDVFIMVLICLNMVTMMV. At 1262-1272 the chain is on the extracellular side; the sequence is ETDEQSDKKEE. Residues 1273–1291 traverse the membrane as a helical segment; that stretch reads VLYWINVVFILIFTTECTL. Residues 1292-1303 are Cytoplasmic-facing; it reads KIIALRRHYFSI. A helical membrane pass occupies residues 1304-1321; it reads GWNIFDFVVVILSILGLL. The Extracellular segment spans residues 1322–1334; it reads LADIIEKYFVSPT. Residues 1335-1351 traverse the membrane as a helical segment; it reads LFRVIRLARIGRVLRLI. At 1352–1370 the chain is on the cytoplasmic side; the sequence is RGAKGIRTLLFALMMSLPA. The helical transmembrane segment at 1371–1388 threads the bilayer; the sequence is LFNIGLLLFLIMFIFSIF. The Extracellular portion of the chain corresponds to 1389-1410; the sequence is GMSNFAYVKKEALIDDMFNFET. The pore-forming intramembrane region spans 1411–1433; the sequence is FGNSMICLFMITTSAGWDGLLSP. Residues 1434-1462 lie on the Extracellular side of the membrane; the sequence is IMNTPPDCDPNVENPGTTVRGNCGSPAIG. Cysteines 1441 and 1456 form a disulfide. A helical transmembrane segment spans residues 1463–1485; that stretch reads IAFFSTYIIMSFLVVVNMFIAII. The Cytoplasmic portion of the chain corresponds to 1486 to 1719; sequence LENFNVATEE…QERDQRETSV (234 aa). One can recognise an IQ domain in the interval 1615 to 1644; the sequence is EEVAATVIQRAYRKYLLLRTVRLASFMYRE.

This sequence belongs to the sodium channel (TC 1.A.1.10) family. Nav1.4/SCN4A subfamily. Voltage-gated sodium (Nav) channels consist of an ion-conducting alpha subunit which is functional on its own associated with regulatory beta subunits.

Its subcellular location is the cell membrane. The enzyme catalyses Na(+)(in) = Na(+)(out). Its function is as follows. Pore-forming subunit of a voltage-gated sodium (Nav) channel that directly mediates the depolarizing phase of action potentials in excitable membranes. Navs, also called VGSCs (voltage-gated sodium channels) or VDSCs (voltage-dependent sodium channels), operate by switching between closed and open conformations depending on the voltage difference across the membrane. In the open conformation they allow Na(+) ions to selectively pass through the pore, along their electrochemical gradient. The influx of Na+ ions provokes membrane depolarization, initiating the propagation of electrical signals throughout cells and tissues. The protein is Sodium channel protein type 4 subunit alpha B (scn4ab) of Takifugu rubripes (Japanese pufferfish).